A 122-amino-acid chain; its full sequence is Large ribosomal subunit protein bL12 (122 aa).

This sequence belongs to the bacterial ribosomal protein bL12 family. As to quaternary structure, homodimer. Part of the ribosomal stalk of the 50S ribosomal subunit. Forms a multimeric L10(L12)X complex, where L10 forms an elongated spine to which 2 to 4 L12 dimers bind in a sequential fashion. Binds GTP-bound translation factors.

Its function is as follows. Forms part of the ribosomal stalk which helps the ribosome interact with GTP-bound translation factors. Is thus essential for accurate translation. The chain is Large ribosomal subunit protein bL12 from Acinetobacter baumannii (strain AB0057).